The following is a 473-amino-acid chain: Dolichyl-diphosphooligosaccharide--protein glycosyltransferase subunit 1B (473 aa).

Residues 1–27 (MAPSLSTAVSSLLLLLLLAAAISVSSS) form the signal peptide. At 28-439 (PPMPEDSIRV…PFQVYYEFNP (412 aa)) the chain is on the lumenal side. Residues N307 and N361 are each glycosylated (N-linked (GlcNAc...) asparagine). The helical transmembrane segment at 440-460 (IFMLAEPLMLISAVFLFFVAC) threads the bilayer. Over 461-473 (IAYLHMDLSIGKS) the chain is Cytoplasmic.

This sequence belongs to the OST1 family. In terms of assembly, component of the oligosaccharyltransferase (OST) complex.

The protein resides in the endoplasmic reticulum membrane. It functions in the pathway protein modification; protein glycosylation. Subunit of the oligosaccharyl transferase (OST) complex that catalyzes the initial transfer of a defined glycan (Glc(3)Man(9)GlcNAc(2) in eukaryotes) from the lipid carrier dolichol-pyrophosphate to an asparagine residue within an Asn-X-Ser/Thr consensus motif in nascent polypeptide chains, the first step in protein N-glycosylation. N-glycosylation occurs cotranslationally and the complex associates with the Sec61 complex at the channel-forming translocon complex that mediates protein translocation across the endoplasmic reticulum (ER). All subunits are required for a maximal enzyme activity. This chain is Dolichyl-diphosphooligosaccharide--protein glycosyltransferase subunit 1B (OST1B), found in Oryza sativa subsp. japonica (Rice).